Consider the following 490-residue polypeptide: Pentatricopeptide repeat-containing protein At2g20710, mitochondrial (490 aa).

A mitochondrion-targeting transit peptide spans 1–86 (MKHLLLLRLV…IKMLRKFSRF (86 aa)). PPR repeat units follow at residues 138-172 (NYHL…GFLK), 173-207 (GCLP…TVKP), 208-243 (DIFT…GLHL), 244-274 (DWRT…SEQM), 280-310 (RKHA…YKEL), 314-344 (YNTG…WEAG), 349-379 (DIRI…LVQK), and 384-421 (DTST…GWRP).

The protein belongs to the PPR family. P subfamily.

Its subcellular location is the mitochondrion. The polypeptide is Pentatricopeptide repeat-containing protein At2g20710, mitochondrial (Arabidopsis thaliana (Mouse-ear cress)).